The following is a 618-amino-acid chain: 1-deoxy-D-xylulose-5-phosphate synthase (618 aa).

Residues histidine 72 and 113–115 (GHA) each bind thiamine diphosphate. Aspartate 144 lines the Mg(2+) pocket. Thiamine diphosphate contacts are provided by residues 145–146 (GA), asparagine 173, histidine 284, and glutamate 359. Asparagine 173 contributes to the Mg(2+) binding site.

This sequence belongs to the transketolase family. DXPS subfamily. In terms of assembly, homodimer. Mg(2+) is required as a cofactor. Requires thiamine diphosphate as cofactor.

The enzyme catalyses D-glyceraldehyde 3-phosphate + pyruvate + H(+) = 1-deoxy-D-xylulose 5-phosphate + CO2. It participates in metabolic intermediate biosynthesis; 1-deoxy-D-xylulose 5-phosphate biosynthesis; 1-deoxy-D-xylulose 5-phosphate from D-glyceraldehyde 3-phosphate and pyruvate: step 1/1. In terms of biological role, catalyzes the acyloin condensation reaction between C atoms 2 and 3 of pyruvate and glyceraldehyde 3-phosphate to yield 1-deoxy-D-xylulose-5-phosphate (DXP). In Dictyoglomus thermophilum (strain ATCC 35947 / DSM 3960 / H-6-12), this protein is 1-deoxy-D-xylulose-5-phosphate synthase.